The following is a 283-amino-acid chain: Pyridoxine/pyridoxal/pyridoxamine kinase (283 aa).

S23 and H59 together coordinate substrate. D125 lines the ATP pocket. Y136 contributes to the Mg(2+) binding site. Residues T157, E162, T195, 222–225 (HAHV), and T232 contribute to the ATP site. Position 162 (E162) interacts with Mg(2+). D234 lines the substrate pocket.

Belongs to the pyridoxine kinase family. PdxK subfamily. Homodimer. The cofactor is Mg(2+).

It carries out the reaction pyridoxal + ATP = pyridoxal 5'-phosphate + ADP + H(+). It catalyses the reaction pyridoxine + ATP = pyridoxine 5'-phosphate + ADP + H(+). The catalysed reaction is pyridoxamine + ATP = pyridoxamine 5'-phosphate + ADP + H(+). It functions in the pathway cofactor metabolism; pyridoxal 5'-phosphate salvage; pyridoxal 5'-phosphate from pyridoxal: step 1/1. Its pathway is cofactor metabolism; pyridoxal 5'-phosphate salvage; pyridoxine 5'-phosphate from pyridoxine: step 1/1. It participates in cofactor metabolism; pyridoxal 5'-phosphate salvage; pyridoxamine 5'-phosphate from pyridoxamine: step 1/1. Its function is as follows. B6-vitamer kinase involved in the salvage pathway of pyridoxal 5'-phosphate (PLP). Catalyzes the phosphorylation of pyridoxine (PN), pyridoxal (PL), and pyridoxamine (PM), forming their respective 5'-phosphorylated esters, i.e. PNP, PLP and PMP. This is Pyridoxine/pyridoxal/pyridoxamine kinase from Bordetella bronchiseptica (strain ATCC BAA-588 / NCTC 13252 / RB50) (Alcaligenes bronchisepticus).